We begin with the raw amino-acid sequence, 69 residues long: Large ribosomal subunit protein uL29 (69 aa).

Belongs to the universal ribosomal protein uL29 family.

The chain is Large ribosomal subunit protein uL29 from Rhodopseudomonas palustris (strain BisB5).